Consider the following 495-residue polypeptide: Protein adenylyltransferase Fic (495 aa).

The segment at 1–23 is disordered; it reads MGTEAEPPSPPSPPAQQQEQANP. A helical membrane pass occupies residues 36–58; that stretch reads LYRLVLFFIAGSLTAWMFHAFSS. TPR repeat units lie at residues 121–154 and 155–189; these read ALVS…APRH and PEVL…SPSN. The Inhibitory (S/T)XXXE(G/N) motif motif lies at 246–251; sequence SVGIEG. ATP is bound by residues glutamate 250 and 331 to 334; that span reads VGGH. In terms of domain architecture, Fido spans 300–435; sequence ITIKDILELH…IRPFVRFIAD (136 aa). Histidine 378 is a catalytic residue. ATP contacts are provided by residues 382–389, 414–415, and asparagine 422; these read DGNGRTSR and YY.

The protein belongs to the fic family. As to quaternary structure, homodimer.

It localises to the membrane. The catalysed reaction is L-tyrosyl-[protein] + ATP = O-(5'-adenylyl)-L-tyrosyl-[protein] + diphosphate. The enzyme catalyses L-threonyl-[protein] + ATP = 3-O-(5'-adenylyl)-L-threonyl-[protein] + diphosphate. It catalyses the reaction 3-O-(5'-adenylyl)-L-threonyl-[protein] + H2O = L-threonyl-[protein] + AMP + H(+). The side chain of Glu-250 determines which of the two opposing activities (AMPylase or de-AMPylase) will take place. In response to endoplasmic reticulum stress, mediates de-AMPylase activity. Adenylyltransferase activity is inhibited by the inhibitory helix present at the N-terminus: Glu-250 binds ATP and competes with ATP-binding at Arg-389, thereby preventing adenylyltransferase activity. In unstressed cells, disengagement of Glu-250 promotes adenylyltransferase activity. Activation dissociates ATP-binding from Glu-250, allowing ordered binding of the entire ATP moiety with the alpha-phosphate in an orientation that is productive for accepting an incoming target hydroxyl side chain. Functionally, protein that can both mediate the addition of adenosine 5'-monophosphate (AMP) to specific residues of target proteins (AMPylation), and the removal of the same modification from target proteins (de-AMPylation), depending on the context. The side chain of Glu-250 determines which of the two opposing activities (AMPylase or de-AMPylase) will take place. Acts as a key regulator of the unfolded protein response (UPR) by mediating AMPylation or de-AMPylation of Hsc70-3/BiP. In unstressed cells, acts as an adenylyltransferase by mediating AMPylation of Hsc70-3/BiP at 'Thr-518', thereby inactivating it. In response to endoplasmic reticulum stress, acts as a phosphodiesterase by mediating removal of ATP (de-AMPylation) from Hsc70-3/BiP at 'Thr-518', leading to restore HSPA5/BiP activity. The chain is Protein adenylyltransferase Fic from Drosophila erecta (Fruit fly).